The primary structure comprises 311 residues: Coproporphyrin III ferrochelatase 1 (311 aa).

Fe-coproporphyrin III is bound by residues Tyr-12, Arg-29, 45 to 46, Ser-53, and Tyr-124; that span reads RY. Fe(2+) is bound by residues His-182 and Glu-263.

Belongs to the ferrochelatase family.

The protein localises to the cytoplasm. The enzyme catalyses Fe-coproporphyrin III + 2 H(+) = coproporphyrin III + Fe(2+). The protein operates within porphyrin-containing compound metabolism; protoheme biosynthesis. Its function is as follows. Involved in coproporphyrin-dependent heme b biosynthesis. Catalyzes the insertion of ferrous iron into coproporphyrin III to form Fe-coproporphyrin III. The polypeptide is Coproporphyrin III ferrochelatase 1 (Bacillus cereus (strain ZK / E33L)).